Consider the following 794-residue polypeptide: Protocadherin beta-6 (794 aa).

Residues 1–27 (MMQTKVQNKKRQVAFFILLMLWGEVGS) form the signal peptide. Over 28-688 (ESIQYSVLEE…AQADLLTVYL (661 aa)) the chain is Extracellular. Cadherin domains lie at 34-132 (VLEE…APEF), 137-241 (MLLK…VPEF), 246-345 (YEAQ…APEL), 350-449 (FISP…APAF), and 454-559 (YTLF…SPFV). N-linked (GlcNAc...) asparagine glycosylation occurs at Asn46. Cys95 and Cys101 form a disulfide bridge. Asn183 is a glycosylation site (N-linked (GlcNAc...) asparagine). Asn416 is a glycosylation site (N-linked (GlcNAc...) asparagine). N-linked (GlcNAc...) asparagine glycosylation is present at Asn565. Residues 566–669 (GSAPCTELVP…LVDGFSQPYL (104 aa)) form the Cadherin 6 domain. Residues 689–709 (VVALASVSSLFLFSVLLFVAV) traverse the membrane as a helical segment. Over 710–794 (RLCRRSRAAS…PTSRNSFPFS (85 aa)) the chain is Cytoplasmic. The tract at residues 773 to 794 (PPQGTEREMEETPTSRNSFPFS) is disordered. Residues 784–794 (TPTSRNSFPFS) are compositionally biased toward polar residues.

As to quaternary structure, forms homodimers in trans (molecules expressed by two different cells). Forms promiscuous heterodimers in cis (at the plasma membrane of the same cell) with other protocadherins.

It is found in the cell membrane. Functionally, calcium-dependent cell-adhesion protein involved in cells self-recognition and non-self discrimination. Thereby, it is involved in the establishment and maintenance of specific neuronal connections in the brain. The sequence is that of Protocadherin beta-6 from Pan troglodytes (Chimpanzee).